The chain runs to 110 residues: MSRILNMNEYISLNHYLILSSLVFTIGMFGLFMHRKNIINILMSIELMLLAVNINFVAFSIYMQELSGQIFSIIILTVAAAETSIGLAILLIYFRNKGSIEITDINQMRG.

Helical transmembrane passes span Leu-13–Met-33, Ile-41–Ile-61, and Ile-73–Tyr-93.

It belongs to the complex I subunit 4L family. NDH-1 is composed of 14 different subunits. Subunits NuoA, H, J, K, L, M, N constitute the membrane sector of the complex.

It is found in the cell inner membrane. It carries out the reaction a quinone + NADH + 5 H(+)(in) = a quinol + NAD(+) + 4 H(+)(out). Its function is as follows. NDH-1 shuttles electrons from NADH, via FMN and iron-sulfur (Fe-S) centers, to quinones in the respiratory chain. The immediate electron acceptor for the enzyme in this species is believed to be ubiquinone. Couples the redox reaction to proton translocation (for every two electrons transferred, four hydrogen ions are translocated across the cytoplasmic membrane), and thus conserves the redox energy in a proton gradient. In Rickettsia felis (strain ATCC VR-1525 / URRWXCal2) (Rickettsia azadi), this protein is NADH-quinone oxidoreductase subunit K.